The following is a 202-amino-acid chain: Small ribosomal subunit protein uS4c (202 aa).

Residues M90–N154 enclose the S4 RNA-binding domain.

Belongs to the universal ribosomal protein uS4 family. As to quaternary structure, part of the 30S ribosomal subunit. Contacts protein S5. The interaction surface between S4 and S5 is involved in control of translational fidelity.

The protein localises to the plastid. Its subcellular location is the chloroplast. Functionally, one of the primary rRNA binding proteins, it binds directly to 16S rRNA where it nucleates assembly of the body of the 30S subunit. With S5 and S12 plays an important role in translational accuracy. This Marchantia polymorpha (Common liverwort) protein is Small ribosomal subunit protein uS4c (rps4).